Reading from the N-terminus, the 450-residue chain is Oxygen-independent coproporphyrinogen III oxidase (450 aa).

The Radical SAM core domain occupies 45–282 (IPAGGSISLY…RTLILWDGYQ (238 aa)). Y54 is an S-adenosyl-L-methionine binding site. Residues C60 and C64 each coordinate [4Fe-4S] cluster. An S-adenosyl-L-methionine-binding site is contributed by F66. C67 is a binding site for [4Fe-4S] cluster. S-adenosyl-L-methionine contacts are provided by residues G111, 112-113 (GT), E144, Q171, R183, D208, A242, and I328.

This sequence belongs to the anaerobic coproporphyrinogen-III oxidase family. As to quaternary structure, monomer. [4Fe-4S] cluster is required as a cofactor.

It is found in the cytoplasm. It carries out the reaction coproporphyrinogen III + 2 S-adenosyl-L-methionine = protoporphyrinogen IX + 2 5'-deoxyadenosine + 2 L-methionine + 2 CO2. It participates in porphyrin-containing compound metabolism; protoporphyrin-IX biosynthesis; protoporphyrinogen-IX from coproporphyrinogen-III (AdoMet route): step 1/1. Involved in the heme and chlorophyll biosynthesis. Catalyzes the anaerobic oxidative decarboxylation of propionate groups of rings A and B of coproporphyrinogen III to yield the vinyl groups in protoporphyrinogen IX. The sequence is that of Oxygen-independent coproporphyrinogen III oxidase (hemZ) from Cereibacter sphaeroides (strain ATCC 17023 / DSM 158 / JCM 6121 / CCUG 31486 / LMG 2827 / NBRC 12203 / NCIMB 8253 / ATH 2.4.1.) (Rhodobacter sphaeroides).